A 214-amino-acid polypeptide reads, in one-letter code: Thymidylate kinase (214 aa).

7–14 (GIDGAGKS) serves as a coordination point for ATP.

Belongs to the thymidylate kinase family.

The enzyme catalyses dTMP + ATP = dTDP + ADP. Its function is as follows. Phosphorylation of dTMP to form dTDP in both de novo and salvage pathways of dTTP synthesis. This is Thymidylate kinase from Chlorobium luteolum (strain DSM 273 / BCRC 81028 / 2530) (Pelodictyon luteolum).